Reading from the N-terminus, the 140-residue chain is UPF0299 membrane protein CGSHiGG_01475 (140 aa).

4 consecutive transmembrane segments (helical) span residues methionine 1–leucine 21, valine 33–isoleucine 52, glycine 60–isoleucine 80, and isoleucine 92–glycine 112.

This sequence belongs to the UPF0299 family.

The protein resides in the cell inner membrane. In Haemophilus influenzae (strain PittGG), this protein is UPF0299 membrane protein CGSHiGG_01475.